Here is a 103-residue protein sequence, read N- to C-terminus: Small ribosomal subunit protein uS10 (103 aa).

The protein belongs to the universal ribosomal protein uS10 family. Part of the 30S ribosomal subunit.

In terms of biological role, involved in the binding of tRNA to the ribosomes. This is Small ribosomal subunit protein uS10 from Campylobacter hominis (strain ATCC BAA-381 / DSM 21671 / CCUG 45161 / LMG 19568 / NCTC 13146 / CH001A).